We begin with the raw amino-acid sequence, 154 residues long: Large ribosomal subunit protein uL13 (154 aa).

It belongs to the universal ribosomal protein uL13 family. As to quaternary structure, part of the 50S ribosomal subunit.

Functionally, this protein is one of the early assembly proteins of the 50S ribosomal subunit, although it is not seen to bind rRNA by itself. It is important during the early stages of 50S assembly. This Rhizobium rhizogenes (strain K84 / ATCC BAA-868) (Agrobacterium radiobacter) protein is Large ribosomal subunit protein uL13.